The primary structure comprises 579 residues: MDYTEKLTRYVANFVDELAKSGVTDVVVSPGSRSTPLALVFTEHPSIKEWIIVDERSAAFFALGLAKKSNRAVAIVCTSGTAAANYYPAIVEAHYSRVPLLVLTADRPHELRHIGAPQTIEQIKMYGDYTKWFHEMAMPEASDKMLHYVRNKASHAKHVAEEGNPGVVHLNFPLREPLTPNFSLDAIWGTKSYTRQNIMQEGTKQLAPNQLQILLEEVGPNKKGLFVCGPQADAEFADAVTSLAGKWGIPVVADPLSQLRTGQHHKDNVIDGYDAFLREAEIRQELKPDYIIRFGAMPVSKSYLFYVMENVETQQYVIEPNEGIRDHSSNQTTFLFADPTTLCQQLEQMTVVDQDVSTAWLKTWQEMNQIAKHYLLEGVEEQITEGEAVRGLAEVIPDGSTLYVGNSMAIRDVDTFYMTSPKTINILANRGANGIDGMVSSGVGASADNERVTLLLGDLSLFHDMNGLFAAKHYKLPITIVLINNNGGGIFSFLPQAKDKRHFEALFGTPMDLSFEQVAKLYEANYNHVKTEEQLKAALYESYQLDGLSIIEVKTDREQNVQWHQAKWQLIKEAILKDG.

This sequence belongs to the TPP enzyme family. MenD subfamily. Homodimer. The cofactor is Mg(2+). Mn(2+) serves as cofactor. Requires thiamine diphosphate as cofactor.

It catalyses the reaction isochorismate + 2-oxoglutarate + H(+) = 5-enolpyruvoyl-6-hydroxy-2-succinyl-cyclohex-3-ene-1-carboxylate + CO2. It participates in quinol/quinone metabolism; 1,4-dihydroxy-2-naphthoate biosynthesis; 1,4-dihydroxy-2-naphthoate from chorismate: step 2/7. The protein operates within quinol/quinone metabolism; menaquinone biosynthesis. Catalyzes the thiamine diphosphate-dependent decarboxylation of 2-oxoglutarate and the subsequent addition of the resulting succinic semialdehyde-thiamine pyrophosphate anion to isochorismate to yield 2-succinyl-5-enolpyruvyl-6-hydroxy-3-cyclohexene-1-carboxylate (SEPHCHC). The polypeptide is 2-succinyl-5-enolpyruvyl-6-hydroxy-3-cyclohexene-1-carboxylate synthase (Oceanobacillus iheyensis (strain DSM 14371 / CIP 107618 / JCM 11309 / KCTC 3954 / HTE831)).